We begin with the raw amino-acid sequence, 311 residues long: MFIVTGGAGFIGSSIVKSLNERGITDILVVDDLTDGAKFVNLVDLQIMDYMDKDEFITQIVSGQDFGDIEAIFHEGACSATTEWNGKFMMENNYEYSKDLLHYCIERDIPFLYASSAATYGGNDTFKEELKYEKPLNVYGYSKFQFDQYVRRIWEDAAAHDETLPQIVGFRYFNVYGPREQHKGSMASVAFHLNNQLNAGENAKLFEGEHKRDFVYIGDVCKVNLWFFDNNVSGIYNLGTGQAESFLEVGQAVVAYHQKGEVERIPFPEHLKGRYQSFTEADLTNLRAAGYKDTFKSVAQGTAEYMAWLNR.

Residues phenylalanine 10–isoleucine 11, aspartate 31–aspartate 32, lysine 38, lysine 53, glutamate 75–serine 79, and asparagine 92 contribute to the NADP(+) site. Tyrosine 139 functions as the Proton acceptor in the catalytic mechanism. An NADP(+)-binding site is contributed by lysine 143. Residue asparagine 174 participates in substrate binding. Positions 175 and 183 each coordinate NADP(+). The Proton acceptor role is filled by lysine 183. Substrate is bound by residues serine 185, histidine 192, phenylalanine 206 to glutamate 209, arginine 212, and tyrosine 275.

The protein belongs to the NAD(P)-dependent epimerase/dehydratase family. HldD subfamily. As to quaternary structure, homopentamer. Requires NADP(+) as cofactor.

The catalysed reaction is ADP-D-glycero-beta-D-manno-heptose = ADP-L-glycero-beta-D-manno-heptose. It functions in the pathway nucleotide-sugar biosynthesis; ADP-L-glycero-beta-D-manno-heptose biosynthesis; ADP-L-glycero-beta-D-manno-heptose from D-glycero-beta-D-manno-heptose 7-phosphate: step 4/4. Catalyzes the interconversion between ADP-D-glycero-beta-D-manno-heptose and ADP-L-glycero-beta-D-manno-heptose via an epimerization at carbon 6 of the heptose. This is ADP-L-glycero-D-manno-heptose-6-epimerase from Psychromonas ingrahamii (strain DSM 17664 / CCUG 51855 / 37).